Reading from the N-terminus, the 98-residue chain is NADH-ubiquinone oxidoreductase chain 4L (98 aa).

3 consecutive transmembrane segments (helical) span residues 1-21 (MSLT…GLLM), 29-49 (SLLC…MTIL), and 61-81 (IILL…LVMV).

Belongs to the complex I subunit 4L family. As to quaternary structure, core subunit of respiratory chain NADH dehydrogenase (Complex I) which is composed of 45 different subunits.

Its subcellular location is the mitochondrion inner membrane. The enzyme catalyses a ubiquinone + NADH + 5 H(+)(in) = a ubiquinol + NAD(+) + 4 H(+)(out). Its function is as follows. Core subunit of the mitochondrial membrane respiratory chain NADH dehydrogenase (Complex I) which catalyzes electron transfer from NADH through the respiratory chain, using ubiquinone as an electron acceptor. Part of the enzyme membrane arm which is embedded in the lipid bilayer and involved in proton translocation. This Stenoderma rufum (Red fruit bat) protein is NADH-ubiquinone oxidoreductase chain 4L (MT-ND4L).